A 518-amino-acid chain; its full sequence is MGLLKRAARAWKLAGQADSPPAQPARKEPTLTRTFKMARQTRLNNSWTGRSNAGDADHVIYKDHETLRQRAREQSINSGYAKRFYRLLRQNVIGPHGITMRSKALKADGYADDDMRRVIEQEFKKWSKRGNCDVTGRYSFVTFMWLWIDTLARDGEVMVRILRNWPNRWGFALQIIESDLLDTTLNTWLSNGNRVRMGVEIDEWEKPIAYWLKRSHPGDNFERPAEQEYQRIPADELRLTFDPWRPHQSRGFTWTHAGANDLHHVEEYAGAELIAAEQGAKLTGFYEQDAEWVDPPGDEDSDDADQGVIIEEIEAGSARLLPYGVTFKPYDNKHPSTNFAPFTKAAVRRIAGAFGPSYNRLAHDLEGVSFSSLRSGEIDERDFYKCIQQFAISELLEWVGEVWMECSMLKGVLKIPPRAWDRLTPIEWLPRGWDWVDPKKDSDAAKTGIETLTDSVSDIMRRKGRDPDDVYNQISEDIRRFKRLGIPNPYGKALQANGVTHVEPDEEDDDEPNATGTD.

The disordered stretch occupies residues 492–518; that stretch reads KALQANGVTHVEPDEEDDDEPNATGTD.

Belongs to the siphoviridae portal protein family. Homododecamer. Interacts with the terminase complex composed of two small and one large terminase subunits.

Its subcellular location is the virion. Functionally, forms the portal vertex of the capsid. This portal plays critical roles in head assembly, genome packaging, neck/tail attachment, and genome ejection. The portal protein multimerizes as a single ring-shaped homododecamer arranged around a central channel. Binds to the terminase subunits to form the packaging machine. The chain is Probable portal protein from Vreelandella aquamarina (Bacteriophage phiHAP-1).